The following is a 144-amino-acid chain: Small ribosomal subunit protein bS6 (144 aa).

A disordered region spans residues 97–144 (DTEQSLIMKSKDEKGDKPERSERRRRDDEEGDAAPAATDTDGDNAEAA). Over residues 105–124 (KSKDEKGDKPERSERRRRDD) the composition is skewed to basic and acidic residues.

It belongs to the bacterial ribosomal protein bS6 family.

In terms of biological role, binds together with bS18 to 16S ribosomal RNA. This Xanthomonas campestris pv. campestris (strain 8004) protein is Small ribosomal subunit protein bS6.